We begin with the raw amino-acid sequence, 833 residues long: Glycerol-3-phosphate acyltransferase (833 aa).

The HXXXXD motif motif lies at 310-315; it reads HRSHID.

This sequence belongs to the GPAT/DAPAT family.

It is found in the cell inner membrane. The catalysed reaction is sn-glycerol 3-phosphate + an acyl-CoA = a 1-acyl-sn-glycero-3-phosphate + CoA. It functions in the pathway phospholipid metabolism; CDP-diacylglycerol biosynthesis; CDP-diacylglycerol from sn-glycerol 3-phosphate: step 1/3. In Pseudomonas syringae pv. tomato (strain ATCC BAA-871 / DC3000), this protein is Glycerol-3-phosphate acyltransferase.